Here is a 57-residue protein sequence, read N- to C-terminus: Small ribosomal subunit protein eS27 (57 aa).

Residues Cys-10, Cys-13, Cys-29, and Cys-32 each contribute to the Zn(2+) site. A C4-type zinc finger spans residues 10–32 (CPDCENEQTVFGKASTEVACAVC).

It belongs to the eukaryotic ribosomal protein eS27 family. Part of the 30S ribosomal subunit. It depends on Zn(2+) as a cofactor.

This is Small ribosomal subunit protein eS27 from Halobacterium salinarum (strain ATCC 29341 / DSM 671 / R1).